The primary structure comprises 401 residues: uncharacterized protein (401 aa).

K242 carries the post-translational modification N6-(pyridoxal phosphate)lysine.

The protein belongs to the class-I pyridoxal-phosphate-dependent aminotransferase family. In terms of assembly, homodimer. Pyridoxal 5'-phosphate is required as a cofactor.

The protein resides in the cytoplasm. This is an uncharacterized protein from Saccharolobus solfataricus (strain ATCC 35092 / DSM 1617 / JCM 11322 / P2) (Sulfolobus solfataricus).